Here is a 325-residue protein sequence, read N- to C-terminus: Lipoyl synthase (325 aa).

[4Fe-4S] cluster contacts are provided by Cys71, Cys76, Cys82, Cys97, Cys101, Cys104, and Ser311. The Radical SAM core domain maps to 83-300; sequence FSGGTATFMI…ERQALAMGFT (218 aa).

The protein belongs to the radical SAM superfamily. Lipoyl synthase family. It depends on [4Fe-4S] cluster as a cofactor.

It is found in the cytoplasm. The enzyme catalyses [[Fe-S] cluster scaffold protein carrying a second [4Fe-4S](2+) cluster] + N(6)-octanoyl-L-lysyl-[protein] + 2 oxidized [2Fe-2S]-[ferredoxin] + 2 S-adenosyl-L-methionine + 4 H(+) = [[Fe-S] cluster scaffold protein] + N(6)-[(R)-dihydrolipoyl]-L-lysyl-[protein] + 4 Fe(3+) + 2 hydrogen sulfide + 2 5'-deoxyadenosine + 2 L-methionine + 2 reduced [2Fe-2S]-[ferredoxin]. It functions in the pathway protein modification; protein lipoylation via endogenous pathway; protein N(6)-(lipoyl)lysine from octanoyl-[acyl-carrier-protein]: step 2/2. Catalyzes the radical-mediated insertion of two sulfur atoms into the C-6 and C-8 positions of the octanoyl moiety bound to the lipoyl domains of lipoate-dependent enzymes, thereby converting the octanoylated domains into lipoylated derivatives. This chain is Lipoyl synthase, found in Methylobacillus flagellatus (strain ATCC 51484 / DSM 6875 / VKM B-1610 / KT).